Reading from the N-terminus, the 295-residue chain is MFKQYLQVTKPGIIFGNLISVIGGFLLASKGHIDYPLFVWTLLGVSLVVASGCVFNNYIDRDIDRKMERTKNRVLVKGLISPEASLVYATLLGIAGFMLLWFGANPLACWLGVMGFVVYVGVYSLYMKRHSVYGTLIGSLSGAAPPVIGYCAVTGDFDSGAAILLAIFSLWQMPHSYAIAIFRFKDYQAANIPVLPVVKGISVAKNHITLYIVAFAVATLMLSLGGYAGYKYLVVAAAVSVWWLGMALRGYKVADDKVWARKLFVFSIVAITALSVMMSVDFMVPDSHSLLAYVR.

Transmembrane regions (helical) follow at residues 8-28, 35-55, 84-104, 107-127, 132-152, 162-182, 208-228, 233-253, and 264-284; these read VTKP…FLLA, YPLF…GCVF, ASLV…WFGA, LACW…SLYM, VYGT…GYCA, AILL…IAIF, ITLY…GGYA, LVVA…GYKV, and FVFS…DFMV.

It belongs to the UbiA prenyltransferase family. Protoheme IX farnesyltransferase subfamily.

It is found in the cell inner membrane. The catalysed reaction is heme b + (2E,6E)-farnesyl diphosphate + H2O = Fe(II)-heme o + diphosphate. The protein operates within porphyrin-containing compound metabolism; heme O biosynthesis; heme O from protoheme: step 1/1. Functionally, converts heme B (protoheme IX) to heme O by substitution of the vinyl group on carbon 2 of heme B porphyrin ring with a hydroxyethyl farnesyl side group. In Klebsiella pneumoniae subsp. pneumoniae (strain ATCC 700721 / MGH 78578), this protein is Protoheme IX farnesyltransferase.